Consider the following 453-residue polypeptide: MAVSVIILAAGQGTRMHSTLPKVLHQLAGRPLLSHVIATARQLNPAQIIVVYGHGGETVPEAFRAADITWVRQELQLGTGHAALQTLPYIKPDTMLLILSGDVPLVKIETLKRLLAMVDQGGVGLLTVELANPNGYGRIIRDRVGGVSKIIEEADASPEQRRIREVNTGITAIEARYLKQIAPKLSNNNAQGEYYLTDIIEHAVASGEKVVAVSAADSIEVMGVNDRQQLAYLERFYQKREAARLMGEGVSLSDPDRFDLRGELLVGKDVYIDINVILEGRVILGDGVKIGPHCYLRNAVLGEGVEVLANCVIEEAAIDACARVGPFTRIRPETRLGEGVHIGNFVEIKKSTINKNSKVNHLSYIGDATIGKKVNIGAGTITCNYDGANKHHTLIEDNVFIGSDTQLIAPVKIGAGATIGAGATITHDVPPGELTLSRTPQKSWPGWKRPSKK.

A pyrophosphorylase region spans residues 1 to 227 (MAVSVIILAA…SIEVMGVNDR (227 aa)). UDP-N-acetyl-alpha-D-glucosamine contacts are provided by residues 8 to 11 (LAAG), K22, Q73, 78 to 79 (GT), 100 to 102 (SGD), G137, E152, N167, and N225. Residue D102 coordinates Mg(2+). N225 lines the Mg(2+) pocket. The tract at residues 228-248 (QQLAYLERFYQKREAARLMGE) is linker. Residues 249–453 (GVSLSDPDRF…WPGWKRPSKK (205 aa)) are N-acetyltransferase. Positions 331 and 349 each coordinate UDP-N-acetyl-alpha-D-glucosamine. H361 (proton acceptor) is an active-site residue. The UDP-N-acetyl-alpha-D-glucosamine site is built by Y364 and N375. Residues A378, 384-385 (NY), S403, A421, and R438 contribute to the acetyl-CoA site. A disordered region spans residues 430–453 (PPGELTLSRTPQKSWPGWKRPSKK).

It in the N-terminal section; belongs to the N-acetylglucosamine-1-phosphate uridyltransferase family. This sequence in the C-terminal section; belongs to the transferase hexapeptide repeat family. As to quaternary structure, homotrimer. The cofactor is Mg(2+).

It localises to the cytoplasm. The catalysed reaction is alpha-D-glucosamine 1-phosphate + acetyl-CoA = N-acetyl-alpha-D-glucosamine 1-phosphate + CoA + H(+). It catalyses the reaction N-acetyl-alpha-D-glucosamine 1-phosphate + UTP + H(+) = UDP-N-acetyl-alpha-D-glucosamine + diphosphate. It participates in nucleotide-sugar biosynthesis; UDP-N-acetyl-alpha-D-glucosamine biosynthesis; N-acetyl-alpha-D-glucosamine 1-phosphate from alpha-D-glucosamine 6-phosphate (route II): step 2/2. It functions in the pathway nucleotide-sugar biosynthesis; UDP-N-acetyl-alpha-D-glucosamine biosynthesis; UDP-N-acetyl-alpha-D-glucosamine from N-acetyl-alpha-D-glucosamine 1-phosphate: step 1/1. The protein operates within bacterial outer membrane biogenesis; LPS lipid A biosynthesis. In terms of biological role, catalyzes the last two sequential reactions in the de novo biosynthetic pathway for UDP-N-acetylglucosamine (UDP-GlcNAc). The C-terminal domain catalyzes the transfer of acetyl group from acetyl coenzyme A to glucosamine-1-phosphate (GlcN-1-P) to produce N-acetylglucosamine-1-phosphate (GlcNAc-1-P), which is converted into UDP-GlcNAc by the transfer of uridine 5-monophosphate (from uridine 5-triphosphate), a reaction catalyzed by the N-terminal domain. This is Bifunctional protein GlmU from Nitrosococcus oceani (strain ATCC 19707 / BCRC 17464 / JCM 30415 / NCIMB 11848 / C-107).